The chain runs to 544 residues: Sialidase (544 aa).

Residues methionine 1–alanine 22 form the signal peptide. 3 BNR repeats span residues serine 239–lysine 250, alanine 318–alanine 329, and methionine 378–methionine 389. The active site involves glutamate 399. Substrate is bound at residue arginine 415. Residues alanine 425–glutamate 436 form a BNR 4 repeat. Arginine 479 contacts substrate. The stretch at lysine 485 to proline 496 is one BNR 5 repeat.

It belongs to the glycosyl hydrolase 33 family.

The protein localises to the periplasm. The catalysed reaction is Hydrolysis of alpha-(2-&gt;3)-, alpha-(2-&gt;6)-, alpha-(2-&gt;8)- glycosidic linkages of terminal sialic acid residues in oligosaccharides, glycoproteins, glycolipids, colominic acid and synthetic substrates.. Sialidases have been suggested to be pathogenic factors in microbial infections. This chain is Sialidase (nanH), found in Bacteroides fragilis (strain YCH46).